The primary structure comprises 104 residues: Large ribosomal subunit protein bL21 (104 aa).

It belongs to the bacterial ribosomal protein bL21 family. As to quaternary structure, part of the 50S ribosomal subunit. Contacts protein L20.

Its function is as follows. This protein binds to 23S rRNA in the presence of protein L20. The chain is Large ribosomal subunit protein bL21 from Kosmotoga olearia (strain ATCC BAA-1733 / DSM 21960 / TBF 19.5.1).